The primary structure comprises 261 residues: Large ribosomal subunit protein uL10m (261 aa).

The transit peptide at 1-28 directs the protein to the mitochondrion; that stretch reads MAAAVAGMLRGGLLPQAGRLPTLQTVRY. A disordered region spans residues 242 to 261; it reads EKDSVMSANGKPDPDTVPDS.

This sequence belongs to the universal ribosomal protein uL10 family. Component of the mitochondrial large ribosomal subunit (mt-LSU). Mature mammalian 55S mitochondrial ribosomes consist of a small (28S) and a large (39S) subunit. The 28S small subunit contains a 12S ribosomal RNA (12S mt-rRNA) and 30 different proteins. The 39S large subunit contains a 16S rRNA (16S mt-rRNA), a copy of mitochondrial valine transfer RNA (mt-tRNA(Val)), which plays an integral structural role, and 52 different proteins. uL10m contributes a single cysteine residue to a zinc-binding site with mL66.

The protein localises to the mitochondrion. The sequence is that of Large ribosomal subunit protein uL10m (MRPL10) from Homo sapiens (Human).